We begin with the raw amino-acid sequence, 288 residues long: Acetyl-coenzyme A carboxylase carboxyl transferase subunit beta (288 aa).

The region spanning 30 to 288 is the CoA carboxyltransferase N-terminal domain; it reads IMTKCPKCKK…KMHQEVKTNA (259 aa). Zn(2+) contacts are provided by Cys-34, Cys-37, Cys-53, and Cys-56. The segment at 34–56 adopts a C4-type zinc-finger fold; the sequence is CPKCKKIMYTKELAENLNVCFNC.

Belongs to the AccD/PCCB family. As to quaternary structure, acetyl-CoA carboxylase is a heterohexamer composed of biotin carboxyl carrier protein (AccB), biotin carboxylase (AccC) and two subunits each of ACCase subunit alpha (AccA) and ACCase subunit beta (AccD). It depends on Zn(2+) as a cofactor.

Its subcellular location is the cytoplasm. The enzyme catalyses N(6)-carboxybiotinyl-L-lysyl-[protein] + acetyl-CoA = N(6)-biotinyl-L-lysyl-[protein] + malonyl-CoA. It participates in lipid metabolism; malonyl-CoA biosynthesis; malonyl-CoA from acetyl-CoA: step 1/1. In terms of biological role, component of the acetyl coenzyme A carboxylase (ACC) complex. Biotin carboxylase (BC) catalyzes the carboxylation of biotin on its carrier protein (BCCP) and then the CO(2) group is transferred by the transcarboxylase to acetyl-CoA to form malonyl-CoA. The chain is Acetyl-coenzyme A carboxylase carboxyl transferase subunit beta from Staphylococcus saprophyticus subsp. saprophyticus (strain ATCC 15305 / DSM 20229 / NCIMB 8711 / NCTC 7292 / S-41).